The primary structure comprises 120 residues: Histone H2B (120 aa).

The interval 1–26 (MAEPAKKKPKKLPKKDKGQKDIKRKK) is disordered. Position 2 is a blocked amino end (Ala) (Ala2). Residues Lys7, Lys10, and Lys11 each carry the N6-acetyllysine modification. Lys115 is covalently cross-linked (Glycyl lysine isopeptide (Lys-Gly) (interchain with G-Cter in ubiquitin)).

The protein belongs to the histone H2B family. In terms of assembly, the nucleosome is a histone octamer containing two molecules each of H2A, H2B, H3 and H4 assembled in one H3-H4 heterotetramer and two H2A-H2B heterodimers. The octamer wraps approximately 147 bp of DNA. Can be acetylated to form H2BK6ac, H2BK33ac and H2BK34ac. In terms of processing, monoubiquitinated to form H2BK143ub1; may give a specific tag for epigenetic transcriptional activation.

Its subcellular location is the nucleus. It is found in the chromosome. Functionally, core component of nucleosome. Nucleosomes wrap and compact DNA into chromatin, limiting DNA accessibility to the cellular machineries which require DNA as a template. Histones thereby play a central role in transcription regulation, DNA repair, DNA replication and chromosomal stability. DNA accessibility is regulated via a complex set of post-translational modifications of histones, also called histone code, and nucleosome remodeling. The polypeptide is Histone H2B (Pisum sativum (Garden pea)).